We begin with the raw amino-acid sequence, 431 residues long: Guanine nucleotide exchange factor rei-2 (431 aa).

The span at 1–21 (MDETATSSEVTETFVSDPTTR) shows a compositional bias: polar residues. The tract at residues 1-28 (MDETATSSEVTETFVSDPTTRQFEEDGH) is disordered. 2 coiled-coil regions span residues 149–171 (EVLN…AESL) and 214–247 (LEAQ…RISE). The disordered stretch occupies residues 249 to 298 (IHEERSTGSLESAVSSDQEDQKSDFKSSESLPGNPPPYAPTAPPPYEDKY). Over residues 255-264 (TGSLESAVSS) the composition is skewed to polar residues. Residues 281–293 (GNPPPYAPTAPPP) show a composition bias toward pro residues.

This sequence belongs to the SH3BP5 family. As to quaternary structure, interacts with rab-11.1. Binds preferentially to the GDP-bound form of rab-11.1.

Its function is as follows. Guanine nucleotide exchange factor for Rab GTPase Rab-11.1. May spatially and temporally regulate the distribution of Rab-11.1 to target membranes during embryogenesis. May play a role in cytokinesis, probably by targeting rab-11.1 to the cleavage furrows. The polypeptide is Guanine nucleotide exchange factor rei-2 (Caenorhabditis elegans).